We begin with the raw amino-acid sequence, 108 residues long: Pyrimidine/purine nucleoside phosphorylase (108 aa).

The protein belongs to the nucleoside phosphorylase PpnP family.

It carries out the reaction a purine D-ribonucleoside + phosphate = a purine nucleobase + alpha-D-ribose 1-phosphate. The catalysed reaction is adenosine + phosphate = alpha-D-ribose 1-phosphate + adenine. The enzyme catalyses cytidine + phosphate = cytosine + alpha-D-ribose 1-phosphate. It catalyses the reaction guanosine + phosphate = alpha-D-ribose 1-phosphate + guanine. It carries out the reaction inosine + phosphate = alpha-D-ribose 1-phosphate + hypoxanthine. The catalysed reaction is thymidine + phosphate = 2-deoxy-alpha-D-ribose 1-phosphate + thymine. The enzyme catalyses uridine + phosphate = alpha-D-ribose 1-phosphate + uracil. It catalyses the reaction xanthosine + phosphate = alpha-D-ribose 1-phosphate + xanthine. Catalyzes the phosphorolysis of diverse nucleosides, yielding D-ribose 1-phosphate and the respective free bases. Can use uridine, adenosine, guanosine, cytidine, thymidine, inosine and xanthosine as substrates. Also catalyzes the reverse reactions. This chain is Pyrimidine/purine nucleoside phosphorylase, found in Acinetobacter baumannii (strain AB307-0294).